A 776-amino-acid polypeptide reads, in one-letter code: Lon protease (776 aa).

In terms of domain architecture, Lon N-terminal spans 12-209; the sequence is LPIIALRGLW…LVYKFVIKEI (198 aa). Residue 360 to 367 participates in ATP binding; the sequence is GPPGVGKT. Residues 596 to 776 enclose the Lon proteolytic domain; sequence EDTVGVVNGL…VKEILDEVLI (181 aa). Catalysis depends on residues serine 683 and lysine 726.

Belongs to the peptidase S16 family. As to quaternary structure, homohexamer. Organized in a ring with a central cavity.

It is found in the cytoplasm. It catalyses the reaction Hydrolysis of proteins in presence of ATP.. ATP-dependent serine protease that mediates the selective degradation of mutant and abnormal proteins as well as certain short-lived regulatory proteins. Required for cellular homeostasis and for survival from DNA damage and developmental changes induced by stress. Degrades polypeptides processively to yield small peptide fragments that are 5 to 10 amino acids long. Binds to DNA in a double-stranded, site-specific manner. The polypeptide is Lon protease (Finegoldia magna (strain ATCC 29328 / DSM 20472 / WAL 2508) (Peptostreptococcus magnus)).